The following is a 395-amino-acid chain: Xylose isomerase (395 aa).

Residues His-54 and Asp-57 contribute to the active site. Glu-181, Glu-217, His-220, Asp-245, Asp-255, Asp-257, and Asp-293 together coordinate Mg(2+).

The protein belongs to the xylose isomerase family. As to quaternary structure, homotetramer. Mg(2+) serves as cofactor.

The protein localises to the cytoplasm. The enzyme catalyses alpha-D-xylose = alpha-D-xylulofuranose. This chain is Xylose isomerase, found in Arthrobacter sp. (strain FB24).